The following is a 1305-amino-acid chain: Myosin-IIIb (1305 aa).

A Protein kinase domain is found at 15-281 (WEIIETIGKG…VTHLLDHPFI (267 aa)). Residues 21–29 (IGKGTYGKV) and Lys-44 each bind ATP. The Proton acceptor role is filled by Asp-144. The region spanning 331–1046 (CLEDDLVNLE…HVEQLNLLLR (716 aa)) is the Myosin motor domain. The segment at 927 to 949 (LMDLLSKMVVGQPHFIRCIKPND) is actin-binding. 2 consecutive IQ domains span residues 1048–1077 (VMGR…KREK) and 1075–1104 (REKG…RRSE). 2 disordered regions span residues 1093-1164 (RKLK…VTSG) and 1200-1233 (SPCE…MLSS).

In the C-terminal section; belongs to the TRAFAC class myosin-kinesin ATPase superfamily. Myosin family. This sequence in the N-terminal section; belongs to the protein kinase superfamily. STE Ser/Thr protein kinase family. In terms of assembly, interacts (via C-terminus) with ESPN. Interacts (via C-terminus) with ESPNL. Expressed in the cochlear hair cells (at protein level). Expressed in utricle hair bundles (at protein level).

It is found in the cytoplasm. It localises to the cytoskeleton. Its subcellular location is the cell projection. The protein localises to the stereocilium. The catalysed reaction is L-seryl-[protein] + ATP = O-phospho-L-seryl-[protein] + ADP + H(+). It catalyses the reaction L-threonyl-[protein] + ATP = O-phospho-L-threonyl-[protein] + ADP + H(+). Functionally, probable actin-based motor with a protein kinase activity. Required for normal cochlear hair bundle development and hearing. Plays an important role in the early steps of cochlear hair bundle morphogenesis. Influences the number and lengths of stereocilia to be produced and limits the growth of microvilli within the forming auditory hair bundles thereby contributing to the architecture of the hair bundle, including its staircase pattern. Involved in the elongation of actin in stereocilia tips by transporting the actin regulatory factor ESPN to the plus ends of actin filaments. The polypeptide is Myosin-IIIb (Myo3b) (Mus musculus (Mouse)).